We begin with the raw amino-acid sequence, 123 residues long: WAP four-disulfide core domain protein 2 (123 aa).

The signal sequence occupies residues 1–28; that stretch reads MPASRLVPLGAVLLLGLLLLLELPPVTG. 2 consecutive WAP domains span residues 30–71 and 74–122; these read GADK…SAIC and PNEK…VTPN. 8 disulfide bridges follow: cysteine 37-cysteine 63, cysteine 46-cysteine 67, cysteine 50-cysteine 62, cysteine 56-cysteine 71, cysteine 81-cysteine 109, cysteine 92-cysteine 113, cysteine 96-cysteine 108, and cysteine 102-cysteine 118. N-linked (GlcNAc...) asparagine glycosylation is present at asparagine 45.

In terms of assembly, homotrimer; disulfide-linked. Epididymis.

It is found in the secreted. Functionally, broad range protease inhibitor. This is WAP four-disulfide core domain protein 2 (WFDC2) from Oryctolagus cuniculus (Rabbit).